The sequence spans 702 residues: MALSYLRPWVSLLLADMALLGLLQGSLGNLLPQGLPGLWIEGTLRLGVLWGLLKVGELLGLVGTLLPLLCLATPLFFSLRALVGGTASTSVVRVASASWGWLLAGYGAVALSWAVWAVLSPAGVQEKEPGQENRTLMKRLLKLSRPDLPFLIAAFFFLVVAVWGETLIPRYSGRVIDILGGDFDPDAFASAIFFMCLFSVGSSFSAGCRGGSFLFTMSRINLRIREQLFSSLLRQDLGFFQETKTGELNSRLSSDTSLMSRWLPFNANILLRSLVKVVGLYFFMLQVSPRLTFLSLLDLPLTIAAEKVYNPRHQAVLKEIQDAVAKAGQVVREAVGGLQTVRSFGAEEQEVSHYKEALERCRQLWWRRDLEKDVYLVIRRVMALGMQVLILNCGVQQILAGEVTRGGLLSFLLYQEEVGQYVRNLVYMYGDMLSNVGAAEKVFSYLDRKPNLPQPGILAPPWLEGRVEFQDVSFSYPRRPEKPVLQGLTFTLHPGTVTALVGPNGSGKSTVAALLQNLYQPTGGQLLLDGEPLTEYDHHYLHRQVVLVGQEPVLFSGSVKDNIAYGLRDCEDAQVMAAAQAACADDFIGEMTNGINTEIGEKGGQLAVGQKQRLAIARALVRNPRVLILDEATSALDAQCEQALQNWRSQGDRTMLVIAHRLHTVQNADQVLVLKQGRLVEHDQLRDGQDVYAHLVQQRLEA.

Residues 1–6 (MALSYL) are Lumenal-facing. The chain crosses the membrane as a helical span at residues 7–27 (RPWVSLLLADMALLGLLQGSL). The Cytoplasmic portion of the chain corresponds to 28–56 (GNLLPQGLPGLWIEGTLRLGVLWGLLKVG). Residues 57-77 (ELLGLVGTLLPLLCLATPLFF) traverse the membrane as a helical segment. Residues 78-98 (SLRALVGGTASTSVVRVASAS) are Lumenal-facing. The chain crosses the membrane as a helical span at residues 99-119 (WGWLLAGYGAVALSWAVWAVL). The Cytoplasmic portion of the chain corresponds to 120–147 (SPAGVQEKEPGQENRTLMKRLLKLSRPD). A helical membrane pass occupies residues 148-168 (LPFLIAAFFFLVVAVWGETLI). The 284-residue stretch at 151–434 (LIAAFFFLVV…LVYMYGDMLS (284 aa)) folds into the ABC transmembrane type-1 domain. Residues 169–186 (PRYSGRVIDILGGDFDPD) lie on the Lumenal side of the membrane. Residues 187–207 (AFASAIFFMCLFSVGSSFSAG) form a helical membrane-spanning segment. At 208-265 (CRGGSFLFTMSRINLRIREQLFSSLLRQDLGFFQETKTGELNSRLSSDTSLMSRWLPF) the chain is on the cytoplasmic side. Residues 266 to 286 (NANILLRSLVKVVGLYFFMLQ) form a helical membrane-spanning segment. Over 287–292 (VSPRLT) the chain is Lumenal. A helical transmembrane segment spans residues 293–313 (FLSLLDLPLTIAAEKVYNPRH). The part of the peptide-binding site stretch occupies residues 300 to 388 (PLTIAAEKVY…RRVMALGMQV (89 aa)). Residues 314–373 (QAVLKEIQDAVAKAGQVVREAVGGLQTVRSFGAEEQEVSHYKEALERCRQLWWRRDLEKD) lie on the Cytoplasmic side of the membrane. A helical transmembrane segment spans residues 374–394 (VYLVIRRVMALGMQVLILNCG). The Lumenal portion of the chain corresponds to 395-407 (VQQILAGEVTRGG). A helical transmembrane segment spans residues 408 to 428 (LLSFLLYQEEVGQYVRNLVYM). The part of the peptide-binding site stretch occupies residues 413 to 432 (LYQEEVGQYVRNLVYMYGDM). At 429–702 (YGDMLSNVGA…AHLVQQRLEA (274 aa)) the chain is on the cytoplasmic side. The 235-residue stretch at 467–701 (VEFQDVSFSY…YAHLVQQRLE (235 aa)) folds into the ABC transporter domain. ATP is bound at residue 502–509 (GPNGSGKS).

This sequence belongs to the ABC transporter superfamily. ABCB family. MHC peptide exporter (TC 3.A.1.209) subfamily. Heterodimer of TAP1 and TAP2 (TAP1-TAP2). A component of the peptide loading complex (PLC), interacts via TAPBP with MHCI heterodimer; this interaction mediates peptide-MHCI assembly. Mg(2+) serves as cofactor.

Its subcellular location is the endoplasmic reticulum membrane. It carries out the reaction a peptide antigen(in) + ATP + H2O = a peptide antigen(out) + ADP + phosphate + H(+). Functionally, ABC transporter associated with antigen processing. In complex with TAP1 mediates unidirectional translocation of peptide antigens from cytosol to endoplasmic reticulum (ER) for loading onto MHC class I (MHCI) molecules. Uses the chemical energy of ATP to export peptides against the concentration gradient. During the transport cycle alternates between 'inward-facing' state with peptide binding site facing the cytosol to 'outward-facing' state with peptide binding site facing the ER lumen. Peptide antigen binding to ATP-loaded TAP1-TAP2 induces a switch to hydrolysis-competent 'outward-facing' conformation ready for peptide loading onto nascent MHCI molecules. Subsequently ATP hydrolysis resets the transporter to the 'inward facing' state for a new cycle. As a component of the peptide loading complex (PLC), acts as a molecular scaffold essential for peptide-MHCI assembly and antigen presentation. In Mus musculus (Mouse), this protein is Antigen peptide transporter 2 (Tap2).